A 318-amino-acid chain; its full sequence is Retinol dehydrogenase 5 (318 aa).

A helical membrane pass occupies residues 1-23; the sequence is MWLPLLLGALLWAVLWLLRDRQS. Over 24-288 the chain is Lumenal; the sequence is LPASDAFIFI…TRYSPGWDAK (265 aa). 32–56 provides a ligand contact to NADP(+); the sequence is FITGCDSGFGRLLALQLDQKGFQVL. S163 contacts substrate. Y175 functions as the Proton acceptor in the catalytic mechanism. The chain crosses the membrane as a helical span at residues 289 to 309; it reads LLWLPASYLPARVVDAVLTWI. At 310–318 the chain is on the cytoplasmic side; that stretch reads LPRPAQSVS.

It belongs to the short-chain dehydrogenases/reductases (SDR) family. As to quaternary structure, homodimer. In terms of tissue distribution, expressed in eye, liver, kidney, brain, intestine, placenta, epididymus and submaxillary gland. In eye, strongly expressed in the retinal pigment epithelium, with lower expression levels detected in the inner segment of the photoreceptor cells and in the outer plexiform layer. In kidney, strong expression detected in the distal tubules and the transitional epithelium in the renal pelvis, with weaker expression detected in the epithelium of the outer stripe of the outer zone of the medulla. In liver, detected in hepatocytes in the centrilobular area. In lung, present in club cells in the epithelium of the bronchiole, in parenchyma and in cartilage surrounding the secondary bronchi. In skin, expressed in epidermis, hair follicles and mast cells in the dermis. Expressed in heart. Not detected in heart. Not detected in lung, spleen, skeletal muscle and testis.

It localises to the endoplasmic reticulum membrane. The enzyme catalyses 11-cis-retinol + NAD(+) = 11-cis-retinal + NADH + H(+). It catalyses the reaction 9-cis-retinol + NAD(+) = 9-cis-retinal + NADH + H(+). The catalysed reaction is 13-cis-retinol + NAD(+) = 13-cis-retinal + NADH + H(+). It carries out the reaction androsterone + NAD(+) = 5alpha-androstan-3,17-dione + NADH + H(+). The enzyme catalyses 5alpha-androstane-3alpha,17beta-diol + NAD(+) = 17beta-hydroxy-5alpha-androstan-3-one + NADH + H(+). It participates in cofactor metabolism; retinol metabolism. Its activity is regulated as follows. Inhibited by 9-cis-, 13-cis- and all-trans-retinoic acids, with the most potent inhibitor being 13-cis-retinoic acid. Weakly inhibited by oleic acid. Catalyzes the oxidation of cis-isomers of retinol, including 11-cis-, 9-cis-, and 13-cis-retinol in an NAD-dependent manner. Has no activity towards all-trans retinal. Plays a significant role in 11-cis retinol oxidation in the retinal pigment epithelium cells (RPE). Also recognizes steroids (androsterone, androstanediol) as its substrates. The sequence is that of Retinol dehydrogenase 5 from Mus musculus (Mouse).